The chain runs to 279 residues: Phosphatidylglycerol--prolipoprotein diacylglyceryl transferase (279 aa).

3 consecutive transmembrane segments (helical) span residues 18 to 38 (LSVRWYGIIIAVGILLGYFVA), 55 to 75 (IIFYSALFGFIAARIYFVIFQ), and 89 to 109 (IWHGGIAIHGGLIGGFIAGVI). Residue R137 coordinates a 1,2-diacyl-sn-glycero-3-phospho-(1'-sn-glycerol). Transmembrane regions (helical) follow at residues 203–223 (LGETFFLYLTWYSIGRFFIEG) and 235–255 (IRVAQLVSILLILISISLIVY).

The protein belongs to the Lgt family.

The protein resides in the cell membrane. The catalysed reaction is L-cysteinyl-[prolipoprotein] + a 1,2-diacyl-sn-glycero-3-phospho-(1'-sn-glycerol) = an S-1,2-diacyl-sn-glyceryl-L-cysteinyl-[prolipoprotein] + sn-glycerol 1-phosphate + H(+). It functions in the pathway protein modification; lipoprotein biosynthesis (diacylglyceryl transfer). In terms of biological role, catalyzes the transfer of the diacylglyceryl group from phosphatidylglycerol to the sulfhydryl group of the N-terminal cysteine of a prolipoprotein, the first step in the formation of mature lipoproteins. This is Phosphatidylglycerol--prolipoprotein diacylglyceryl transferase from Staphylococcus aureus (strain bovine RF122 / ET3-1).